Here is a 295-residue protein sequence, read N- to C-terminus: Small ribosomal subunit protein uS2 (295 aa).

Ser-2 carries the post-translational modification N-acetylserine. A Phosphoserine modification is found at Ser-43. N6-acetyllysine is present on Lys-52. The interval 54–113 (TWEKLLLAARAIVAIENPADVSVISSRNTGQRAVLKFAAATGATPIAGRFTPGTFTNQIQ) is interaction with PPP1R16B. Lys-89 is subject to N6-acetyllysine; alternate. A Glycyl lysine isopeptide (Lys-Gly) (interchain with G-Cter in SUMO2); alternate cross-link involves residue Lys-89. Position 97 is a phosphothreonine (Thr-97). 2 laminin-binding regions span residues 161–180 (IPCN…MLAR) and 205–229 (RDPE…EFQG). 5 [DE]-W-[ST] repeats span residues 230 to 232 (EWT), 247 to 249 (DWS), 266 to 268 (DWS), 275 to 277 (DWS), and 293 to 295 (EWS). The tract at residues 242-295 (QPEVADWSEGVQVPSVPIQQFPTEDWSAQPSTEDWSAAPTAQATEWVGTTTEWS) is laminin-binding. The disordered stretch occupies residues 266 to 295 (DWSAQPSTEDWSAAPTAQATEWVGTTTEWS).

This sequence belongs to the universal ribosomal protein uS2 family. Monomer (37LRP) and homodimer (67LR). Component of the small ribosomal subunit. Mature ribosomes consist of a small (40S) and a large (60S) subunit. The 40S subunit contains about 33 different proteins and 1 molecule of RNA (18S). The 60S subunit contains about 49 different proteins and 3 molecules of RNA (28S, 5.8S and 5S). Interacts with RPS21. Interacts with several laminins including at least LAMB1. Interacts with MDK. The mature dimeric form interacts with PPP1R16B (via its fourth ankyrin repeat). Interacts with PPP1CA only in the presence of PPP1R16B. Acylated. Acylation may be a prerequisite for conversion of the monomeric 37 kDa laminin receptor precursor (37LRP) to the mature dimeric 67 kDa laminin receptor (67LR), and may provide a mechanism for membrane association. Post-translationally, cleaved by stromelysin-3 (ST3) at the cell surface. Cleavage by stromelysin-3 may be a mechanism to alter cell-extracellular matrix interactions.

It localises to the cell membrane. It is found in the cytoplasm. Its subcellular location is the nucleus. Its function is as follows. Required for the assembly and/or stability of the 40S ribosomal subunit. Required for the processing of the 20S rRNA-precursor to mature 18S rRNA in a late step of the maturation of 40S ribosomal subunits. Also functions as a cell surface receptor for laminin. Plays a role in cell adhesion to the basement membrane and in the consequent activation of signaling transduction pathways. May play a role in cell fate determination and tissue morphogenesis. Also acts as a receptor for several other ligands, including the pathogenic prion protein, viruses, and bacteria. Acts as a PPP1R16B-dependent substrate of PPP1CA. The protein is Small ribosomal subunit protein uS2 of Bos taurus (Bovine).